The chain runs to 316 residues: Neuroguidin (316 aa).

Disordered regions lie at residues 143-172 (SEAD…VKKY) and 280-316 (SALT…RKRH). Positions 145–157 (ADEGESDSGEDCA) are enriched in acidic residues. Residues 297-316 (KKSRKGPKKSKKRKGFRKRH) are compositionally biased toward basic residues.

Belongs to the SAS10 family. As to quaternary structure, part of the small subunit (SSU) processome, composed of more than 70 proteins and the RNA chaperone small nucleolar RNA (snoRNA) U3.

It localises to the nucleus. The protein localises to the nucleolus. Its subcellular location is the chromosome. It is found in the centromere. The protein resides in the cytoplasm. It localises to the cell projection. The protein localises to the axon. Its subcellular location is the dendrite. It is found in the filopodium. Functionally, part of the small subunit (SSU) processome, first precursor of the small eukaryotic ribosomal subunit. During the assembly of the SSU processome in the nucleolus, many ribosome biogenesis factors, an RNA chaperone and ribosomal proteins associate with the nascent pre-rRNA and work in concert to generate RNA folding, modifications, rearrangements and cleavage as well as targeted degradation of pre-ribosomal RNA by the RNA exosome. Its dissociation from the complex determines the transition from state pre-A1 to state pre-A1*. May inhibit mRNA translation. The polypeptide is Neuroguidin (ngdn) (Xenopus tropicalis (Western clawed frog)).